A 332-amino-acid chain; its full sequence is Heterogeneous nuclear ribonucleoprotein A/B (332 aa).

The segment at 1 to 66 (MSEAGEEQPM…DQINASKNEE (66 aa)) is disordered. The span at 29-49 (GRGWTGAAAGAGGATAAPPSG) shows a compositional bias: low complexity. 2 consecutive RRM domains span residues 69–154 (GKMF…PVKK) and 153–233 (KKIF…QPKE). Serine 81 is subject to Phosphoserine. Residues lysine 130 and lysine 203 each participate in a glycyl lysine isopeptide (Lys-Gly) (interchain with G-Cter in SUMO2) cross-link. Position 215 is an N6-acetyllysine (lysine 215). The tract at residues 235 to 268 (YQQQQYGSGGRGNRNRGNRGSGGGGGGGGQSQSW) is disordered. Phosphoserine is present on serine 242. At arginine 245 the chain carries Dimethylated arginine; alternate. Arginine 245 bears the Omega-N-methylarginine; alternate mark. Omega-N-methylarginine is present on residues arginine 250, glycine 251, arginine 253, and glycine 254. Residues 253–264 (RGSGGGGGGGGQ) show a composition bias toward gly residues. Serine 255 and glycine 256 each carry phosphoserine. An N6-acetyllysine mark is found at glycine 271, tyrosine 272, and lysine 318. Residues 311 to 332 (QGSTNYGKSQRRGGHQNNYKPY) form a disordered region. Position 322 is a dimethylated arginine; alternate (arginine 322). Arginine 322 is subject to Omega-N-methylarginine; alternate. At arginine 322 the chain carries Asymmetric dimethylarginine; alternate.

In terms of assembly, identified in a IGF2BP1-dependent mRNP granule complex containing untranslated mRNAs. Interacts with APOBEC1. Dimethylation at Arg-322 is probably asymmetric. Ubiquitous.

It localises to the nucleus. The protein localises to the cytoplasm. Binds single-stranded RNA. Has a high affinity for G-rich and U-rich regions of hnRNA. Also binds to APOB mRNA transcripts around the RNA editing site. The protein is Heterogeneous nuclear ribonucleoprotein A/B (HNRNPAB) of Homo sapiens (Human).